The chain runs to 486 residues: Ribulose bisphosphate carboxylase large chain (486 aa).

Positions 125 and 175 each coordinate substrate. The Proton acceptor role is filled by Lys-177. Residue Lys-179 coordinates substrate. Mg(2+) is bound by residues Lys-203, Asp-205, and Glu-206. Lys-203 is modified (N6-carboxylysine). His-295 (proton acceptor) is an active-site residue. Arg-296, His-328, and Ser-380 together coordinate substrate.

The protein belongs to the RuBisCO large chain family. Type I subfamily. Heterohexadecamer of 8 large chains and 8 small chains. Requires Mg(2+) as cofactor.

It carries out the reaction 2 (2R)-3-phosphoglycerate + 2 H(+) = D-ribulose 1,5-bisphosphate + CO2 + H2O. The enzyme catalyses D-ribulose 1,5-bisphosphate + O2 = 2-phosphoglycolate + (2R)-3-phosphoglycerate + 2 H(+). In terms of biological role, ruBisCO catalyzes two reactions: the carboxylation of D-ribulose 1,5-bisphosphate, the primary event in carbon dioxide fixation, as well as the oxidative fragmentation of the pentose substrate. Both reactions occur simultaneously and in competition at the same active site. This Afipia carboxidovorans (strain ATCC 49405 / DSM 1227 / KCTC 32145 / OM5) (Oligotropha carboxidovorans) protein is Ribulose bisphosphate carboxylase large chain.